The primary structure comprises 761 residues: 5-methyltetrahydropteroyltriglutamate--homocysteine methyltransferase (761 aa).

5-methyltetrahydropteroyltri-L-glutamate-binding positions include 16–19 and Lys116; that span reads RELK. L-homocysteine contacts are provided by residues 435–437 and Glu488; that span reads IGS. L-methionine contacts are provided by residues 435–437 and Glu488; that span reads IGS. 5-methyltetrahydropteroyltri-L-glutamate contacts are provided by residues 519 to 520 and Trp565; that span reads RC. Asp603 provides a ligand contact to L-homocysteine. Asp603 contributes to the L-methionine binding site. 5-methyltetrahydropteroyltri-L-glutamate is bound at residue Glu609. 3 residues coordinate Zn(2+): His645, Cys647, and Glu669. The Proton donor role is filled by His698. Cys730 is a binding site for Zn(2+).

This sequence belongs to the vitamin-B12 independent methionine synthase family. It depends on Zn(2+) as a cofactor.

The catalysed reaction is 5-methyltetrahydropteroyltri-L-glutamate + L-homocysteine = tetrahydropteroyltri-L-glutamate + L-methionine. The protein operates within amino-acid biosynthesis; L-methionine biosynthesis via de novo pathway; L-methionine from L-homocysteine (MetE route): step 1/1. Functionally, catalyzes the transfer of a methyl group from 5-methyltetrahydrofolate to homocysteine resulting in methionine formation. This chain is 5-methyltetrahydropteroyltriglutamate--homocysteine methyltransferase, found in Hahella chejuensis (strain KCTC 2396).